The sequence spans 282 residues: Pantothenate synthetase (282 aa).

An ATP-binding site is contributed by 29-36 (MGFLHEGH). Residue histidine 36 is the Proton donor of the active site. Glutamine 60 provides a ligand contact to (R)-pantoate. A beta-alanine-binding site is contributed by glutamine 60. 146–149 (GEKD) is a binding site for ATP. Position 152 (glutamine 152) interacts with (R)-pantoate. ATP-binding positions include isoleucine 175 and 183 to 186 (KSSR).

Belongs to the pantothenate synthetase family. As to quaternary structure, homodimer.

The protein localises to the cytoplasm. The catalysed reaction is (R)-pantoate + beta-alanine + ATP = (R)-pantothenate + AMP + diphosphate + H(+). The protein operates within cofactor biosynthesis; (R)-pantothenate biosynthesis; (R)-pantothenate from (R)-pantoate and beta-alanine: step 1/1. In terms of biological role, catalyzes the condensation of pantoate with beta-alanine in an ATP-dependent reaction via a pantoyl-adenylate intermediate. This chain is Pantothenate synthetase, found in Clostridioides difficile (strain 630) (Peptoclostridium difficile).